A 606-amino-acid chain; its full sequence is Pro-secreted protein ORF2 (606 aa).

The signal sequence occupies residues 1-19; that stretch reads MSLCRLLLMLAMCCGVSRG. The segment at 22 to 54 is disordered; that stretch reads TLPAGGRRGQRRRDNSAQWSTQQRPEGAVGPAP. The short motif at 28–34 is the Nuclear localization signal element; the sequence is RRGQRRR. Residue Asn255 is glycosylated (N-linked (GlcNAc...) asparagine; by host). Residues 313-339 form a particle formation region; the sequence is ILGVLFNLADTVLGGLPSTLLRAASGQ. The N-linked (GlcNAc...) asparagine; by host glycan is linked to Asn510.

It belongs to the hepevirus capsid protein family. In terms of assembly, homodimer. As to quaternary structure, self-assembles to form the capsid. The capsid is dominated by dimers that define the 30 morphological units. Interacts with phosphorylated protein ORF3. N-glycosylated.

It localises to the secreted. The protein resides in the virion. Its subcellular location is the host cytoplasm. The protein localises to the host endoplasmic reticulum. It is found in the host Golgi apparatus. It localises to the host cell surface. The protein resides in the host nucleus. In terms of biological role, plays a role in the inhibition of host antibody-mediated neutralization without blocking viral cell entry. Its function is as follows. Forms an icosahedral capsid with a T=1 symmetry and a 34 nm diameter. The capsid is composed of 60 copies linked to each other. Binds to the 5' end of the genomic RNA to mediate genome encapsidation. The sequence is that of Pro-secreted protein ORF2 from Gallus gallus (Chicken).